A 571-amino-acid chain; its full sequence is Protein tesmin/TSO1-like CXC 6 (571 aa).

5 disordered regions span residues 1-52 (MGEG…AAAS), 92-119 (IRHPRPESPNSMPRPAGETRDGTPQKKK), 293-325 (NQGTKDSSTHRLGQANNGRTTSSQTGSRAGGNA), 370-411 (LANQ…RSLS), and 507-571 (NGVS…KKDL). The span at 7 to 16 (GDKFPPKTDE) shows a compositional bias: basic and acidic residues. One can recognise a CRC domain in the interval 117-241 (KKKQCNCKHS…KCLDCKNFEG (125 aa)). Polar residues-rich tracts occupy residues 293–319 (NQGTKDSSTHRLGQANNGRTTSSQTGS), 373–388 (QKETSVASSVQDQGHV), and 508–539 (GVSQTAKQPSQLNTTTPNTSSQTANGVSQTAK). Over residues 540–557 (QPSQLTTTTTTPNTSSQT) the composition is skewed to low complexity.

It belongs to the lin-54 family. Ubiquitous but expressed mostly in flowers.

Its subcellular location is the nucleus. Its function is as follows. Plays a role in development of both male and female reproductive tissues. The protein is Protein tesmin/TSO1-like CXC 6 (TCX6) of Arabidopsis thaliana (Mouse-ear cress).